A 182-amino-acid chain; its full sequence is Small ribosomal subunit protein uS9 (182 aa).

The protein belongs to the universal ribosomal protein uS9 family.

The chain is Small ribosomal subunit protein uS9 from Corynebacterium glutamicum (strain R).